A 430-amino-acid chain; its full sequence is Tol-Pal system protein TolB (430 aa).

The signal sequence occupies residues 1 to 21; it reads MKQAFRLMVGLLVLWASVLHA.

It belongs to the TolB family. The Tol-Pal system is composed of five core proteins: the inner membrane proteins TolA, TolQ and TolR, the periplasmic protein TolB and the outer membrane protein Pal. They form a network linking the inner and outer membranes and the peptidoglycan layer.

The protein resides in the periplasm. Part of the Tol-Pal system, which plays a role in outer membrane invagination during cell division and is important for maintaining outer membrane integrity. TolB occupies a key intermediary position in the Tol-Pal system because it communicates directly with both membrane-embedded components, Pal in the outer membrane and TolA in the inner membrane. The protein is Tol-Pal system protein TolB of Edwardsiella ictaluri (strain 93-146).